The following is a 247-amino-acid chain: 14-3-3 protein zeta (247 aa).

Belongs to the 14-3-3 family. As to quaternary structure, homodimer.

It is found in the cytoplasm. Functionally, adapter protein implicated in the regulation of a large spectrum of both general and specialized signaling pathways. Binds to a large number of partners, usually by recognition of a phosphoserine or phosphothreonine motif. Binding generally results in the modulation of the activity of the binding partner. This is 14-3-3 protein zeta (14-3-3zeta) from Bombyx mori (Silk moth).